Consider the following 229-residue polypeptide: General odorant-binding protein 69 (229 aa).

Positions 1–20 (MDRLLLVLLSSASLLLTVYG) are cleaved as a signal peptide. Cysteine 66 and cysteine 106 form a disulfide bridge.

Belongs to the PBP/GOBP family.

The protein localises to the secreted. Functionally, present in the aqueous fluid surrounding olfactory sensory dendrites and are thought to aid in the capture and transport of hydrophobic odorants into and through this fluid. The chain is General odorant-binding protein 69 (Obp69) from Anopheles gambiae (African malaria mosquito).